Reading from the N-terminus, the 654-residue chain is Tetratricopeptide repeat protein 30 homolog (654 aa).

TPR repeat units follow at residues 10-43, 44-76, 145-178, 180-212, 393-426, 452-485, and 535-568; these read DGEY…STTR, AGLS…VPDV, ASTK…GGFN, HVAY…GIRN, CRSA…RAWI, SWRL…NYDD, and CIVN…GSGA.

Belongs to the TTC30/dfy-1/fleer family.

It localises to the cell projection. Its subcellular location is the cilium. In terms of biological role, required for polyglutamylation of axonemal tubulin in sensory cilia. Plays a role in anterograde intraflagellar transport (IFT), the process by which cilia precursors are transported from the base of the cilium to the site of their incorporation at the tip. The polypeptide is Tetratricopeptide repeat protein 30 homolog (Anopheles gambiae (African malaria mosquito)).